We begin with the raw amino-acid sequence, 487 residues long: MFITGAFFDILEVGPKKIRRCFELVRVRFAPSPTGHLHVGGARTALFNWMFARKEGGKFILRIEDTDTERSSREYEQQILESLRWCGLDWDEGPDIGGDFGPYRQSERLEIYREYAEKLVEDKRAYYVVYDKEDPSKELFTTYEYPHEYKEKGHPVTIKFKVLPGKTSFEDLLKGYMEFDNSTLEDFIIMKSNGFPTYNFAVVVDDHLMRISHVFRGEDHLSNTPKQLMIYEAFGWEAPVFMHIPLILGSDRTPLSKRHGATSVEHFRREGILSRALMNYLALLGWRVEGDEIFTIEEKLQSFDPKDISNKGVIFDYQKLEWVNGKHMRRIDLEDLKREFIEWAKYAGKEIPSVDERYFSETLRICREKVNTLSQLYDIMYPFMNDDYEYEKDYVEKFLKREEAERVLEEAKKAFKDLNSWNMEEIEKTLRDLSEKGLASKKVVFQLIRGAVTGKLVTPGLFETIEVLGKERTLKRLERTLQFLKKT.

A 'HIGH' region motif is present at residues 31–41 (PSPTGHLHVGG). Residues 254-258 (PLSKR) carry the 'KMSKS' region motif. Residue Lys-257 coordinates ATP.

It belongs to the class-I aminoacyl-tRNA synthetase family. Glutamate--tRNA ligase type 1 subfamily. As to quaternary structure, monomer.

The protein resides in the cytoplasm. The enzyme catalyses tRNA(Glu) + L-glutamate + ATP = L-glutamyl-tRNA(Glu) + AMP + diphosphate. Functionally, catalyzes the attachment of glutamate to tRNA(Glu) in a two-step reaction: glutamate is first activated by ATP to form Glu-AMP and then transferred to the acceptor end of tRNA(Glu). The sequence is that of Glutamate--tRNA ligase 2 from Thermotoga maritima (strain ATCC 43589 / DSM 3109 / JCM 10099 / NBRC 100826 / MSB8).